The primary structure comprises 270 residues: Checkpoint signal transducer rad24 (270 aa).

Residues Ser-34 and Ser-66 each carry the phosphoserine modification. Residues 242-270 (AAAGGNTEGAQENAPSNAPEGEAEPKADA) form a disordered region.

The protein belongs to the 14-3-3 family. As to quaternary structure, homodimer. Binds preferentially to mei2 phosphorylated by ran1/pat1. Binds preferentially to cdc25 phosphorylated by srk1 during G2; the interaction is increased during osmotic stress. Interacts with byr2. Interacts with rad25.

The protein localises to the cytoplasm. Acts in cell cycle and stress checkpoint signaling by sequestering signal transducers regulated by the checkpoints. Required for the DNA damage checkpoint that ensures that DNA damage is repaired before mitosis is attempted. During environmental stress, sequesters srk1-phosphorylated cdc25 in the cytoplasm to delay the G2/M transition. Sequesters byr2 in the cytoplasm to prevent its translocation to the plasma membrane. Sequesters ran1/pat1-phosphorylated mei2 from its non-coding RNA activators (including meiRNA), to prevent meiotic induction in vegetative cells and to regulate meiosis I. This chain is Checkpoint signal transducer rad24, found in Schizosaccharomyces pombe (strain 972 / ATCC 24843) (Fission yeast).